The primary structure comprises 145 residues: MLSVQPKGKQKGCAGCNRKIKDRYLLKALDKYWHEDCLKCACCDCRLGEVGSTLYTKANLILCRRDYLRLFGTTGNCAACSKLIPAFEMVMRARDNVYHLDCFACQLCNQRFCVGDKFFLKNNMILCQTDYEEGLMKEGYAPQVR.

LIM zinc-binding domains lie at 11–73 and 75–137; these read KGCA…LFGT and GNCA…GLMK.

This is LIM domain only protein 3 (Lmo3) from Rattus norvegicus (Rat).